Here is a 339-residue protein sequence, read N- to C-terminus: Glucokinase (339 aa).

ATP is bound at residue 16 to 21; that stretch reads GDIGGT.

This sequence belongs to the bacterial glucokinase family.

It is found in the cytoplasm. It carries out the reaction D-glucose + ATP = D-glucose 6-phosphate + ADP + H(+). The protein is Glucokinase of Rhizobium meliloti (strain 1021) (Ensifer meliloti).